A 344-amino-acid polypeptide reads, in one-letter code: Nuclear distribution protein nudE-like 1-B (344 aa).

The stretch at 26–189 (YKKSCHDAQE…ELAVRERTSD (164 aa)) forms a coiled coil.

Belongs to the nudE family. In terms of processing, phosphorylated in mitosis.

Its subcellular location is the cytoplasm. The protein resides in the cytoskeleton. The protein localises to the microtubule organizing center. It is found in the centrosome. It localises to the spindle. Required for organization of the cellular microtubule array and microtubule anchoring at the centrosome. Positively regulates the activity of the minus-end directed microtubule motor protein dynein. May enhance dynein-mediated microtubule sliding by targeting dynein to the microtubule plus end. In Danio rerio (Zebrafish), this protein is Nuclear distribution protein nudE-like 1-B (ndel1b).